Consider the following 489-residue polypeptide: Probable transporter MCH1 (489 aa).

3 helical membrane passes run 30–50 (IAYI…LISL), 68–88 (MIVT…GIIA), and 92–112 (GPIT…AYLA). N-linked (GlcNAc...) asparagine glycosylation is present at Asn-123. A run of 8 helical transmembrane segments spans residues 132 to 152 (TLVC…SALI), 163 to 183 (LLSI…GSQF), 202 to 222 (VFKA…IATS), 279 to 299 (VLYI…MFIA), 307 to 327 (VLAG…YALT), 351 to 371 (WILL…YMLS), 388 to 408 (FYIG…YPTI), and 421 to 441 (AYGT…LIYA). N-linked (GlcNAc...) asparagine glycosylation occurs at Asn-450. Residues 462–482 (ETTALEFCAAILLTVVVTVLW) form a helical membrane-spanning segment.

The protein belongs to the major facilitator superfamily.

The protein resides in the vacuole membrane. Its function is as follows. Probable transporter. The sequence is that of Probable transporter MCH1 (MCH1) from Candida glabrata (strain ATCC 2001 / BCRC 20586 / JCM 3761 / NBRC 0622 / NRRL Y-65 / CBS 138) (Yeast).